Reading from the N-terminus, the 472-residue chain is MSNMEQDRWSRVKGRLRSSVGEDVYSSWFARMDLESVHDESVHLSVPTRFLKSWIQTHYSDKVLSCWQAELPEVNRVDLTVRSPVRCATPAKEVPAPVESRRDEQRPSAERSNGATPVSANHDALGGSPLDPRLTFASFVVGRSNTLAHAAAKQVAEGRRGDPVMFNPLYIHSGVGLGKTHLLQAVTWAGNAGTERKVLYLTAEKFMYGFVAALKTQTSLAFKEALRGIDVLVIDDLQFLQGKTTQAEFCHTLNALIDAGRQVVVAADRPPADLESLDERVRSRLAGGLVVEMAPLGEDLRLGILRSRVVAARTHHASFDVPQPVLEYLARTITHNGRDLEGAINRLLAHSKLNNQPVTLEMAEHEVRDLIRPSEPKRIKIEDIQRIVARQYNVSRSDLLSSRRTANVVRPRQVAMYLAKTLTLRSLPEIGRRFGGRDHTTVLHAVRKIEGLVSKDTTLSDEVESLKRQLQE.

A domain I, interacts with DnaA modulators region spans residues 1 to 73; the sequence is MSNMEQDRWS…LSCWQAELPE (73 aa). The segment at 73–128 is domain II; the sequence is EVNRVDLTVRSPVRCATPAKEVPAPVESRRDEQRPSAERSNGATPVSANHDALGGS. Residues 90 to 124 form a disordered region; sequence PAKEVPAPVESRRDEQRPSAERSNGATPVSANHDA. The span at 99–109 shows a compositional bias: basic and acidic residues; the sequence is ESRRDEQRPSA. The span at 110-119 shows a compositional bias: polar residues; that stretch reads ERSNGATPVS. The segment at 129 to 351 is domain III, AAA+ region; it reads PLDPRLTFAS…GAINRLLAHS (223 aa). ATP contacts are provided by Gly-176, Gly-178, Lys-179, and Thr-180. A domain IV, binds dsDNA region spans residues 352–472; it reads KLNNQPVTLE…VESLKRQLQE (121 aa).

The protein belongs to the DnaA family. In terms of assembly, oligomerizes as a right-handed, spiral filament on DNA at oriC.

It is found in the cytoplasm. Functionally, plays an essential role in the initiation and regulation of chromosomal replication. ATP-DnaA binds to the origin of replication (oriC) to initiate formation of the DNA replication initiation complex once per cell cycle. Binds the DnaA box (a 9 base pair repeat at the origin) and separates the double-stranded (ds)DNA. Forms a right-handed helical filament on oriC DNA; dsDNA binds to the exterior of the filament while single-stranded (ss)DNA is stabiized in the filament's interior. The ATP-DnaA-oriC complex binds and stabilizes one strand of the AT-rich DNA unwinding element (DUE), permitting loading of DNA polymerase. After initiation quickly degrades to an ADP-DnaA complex that is not apt for DNA replication. Binds acidic phospholipids. This is Chromosomal replication initiator protein DnaA from Rhodopseudomonas palustris (strain ATCC BAA-98 / CGA009).